We begin with the raw amino-acid sequence, 210 residues long: 2-dehydro-3-deoxy-phosphogluconate aldolase (210 aa).

Glu41 (proton acceptor) is an active-site residue. Pyruvate contacts are provided by Arg45, Thr69, and Lys129. The active-site Schiff-base intermediate with substrate is Lys129.

The protein belongs to the KHG/KDPG aldolase family. Homotrimer.

The protein resides in the cytoplasm. It catalyses the reaction 2-dehydro-3-deoxy-6-phospho-D-gluconate = D-glyceraldehyde 3-phosphate + pyruvate. It participates in carbohydrate acid metabolism; 2-dehydro-3-deoxy-D-gluconate degradation; D-glyceraldehyde 3-phosphate and pyruvate from 2-dehydro-3-deoxy-D-gluconate: step 2/2. In terms of biological role, catalyzes the reversible, stereospecific retro-aldol cleavage of 2-keto-3-deoxy-6-phosphogluconate (KDPG) to pyruvate and D-glyceraldehyde-3-phosphate. The polypeptide is 2-dehydro-3-deoxy-phosphogluconate aldolase (eda) (Treponema pallidum (strain Nichols)).